A 127-amino-acid chain; its full sequence is Large ribosomal subunit protein eL8 (127 aa).

This sequence belongs to the eukaryotic ribosomal protein eL8 family. In terms of assembly, part of the 50S ribosomal subunit. Probably part of the RNase P complex.

The protein localises to the cytoplasm. Its function is as follows. Multifunctional RNA-binding protein that recognizes the K-turn motif in ribosomal RNA, the RNA component of RNase P, box H/ACA, box C/D and box C'/D' sRNAs. This Picrophilus torridus (strain ATCC 700027 / DSM 9790 / JCM 10055 / NBRC 100828 / KAW 2/3) protein is Large ribosomal subunit protein eL8.